The following is a 294-amino-acid chain: NAD kinase (294 aa).

The Proton acceptor role is filled by aspartate 74. Residues aspartate 74–glycine 75, lysine 79, asparagine 149–glutamate 150, aspartate 179, threonine 190–serine 195, and alanine 214 each bind NAD(+).

This sequence belongs to the NAD kinase family. A divalent metal cation serves as cofactor.

Its subcellular location is the cytoplasm. The enzyme catalyses NAD(+) + ATP = ADP + NADP(+) + H(+). Its function is as follows. Involved in the regulation of the intracellular balance of NAD and NADP, and is a key enzyme in the biosynthesis of NADP. Catalyzes specifically the phosphorylation on 2'-hydroxyl of the adenosine moiety of NAD to yield NADP. This chain is NAD kinase, found in Christiangramia forsetii (strain DSM 17595 / CGMCC 1.15422 / KT0803) (Gramella forsetii).